The following is a 500-amino-acid chain: Amino-acid acetyltransferase, mitochondrial (500 aa).

A mitochondrion-targeting transit peptide spans 1–19 (MQKPSLSQDLIWILKSVQS). Residues 336–496 (FLGPKCLTDG…YMSVIDKIQP (161 aa)) enclose the N-acetyltransferase domain.

It belongs to the acetyltransferase family.

The protein localises to the mitochondrion. It catalyses the reaction L-glutamate + acetyl-CoA = N-acetyl-L-glutamate + CoA + H(+). The protein operates within amino-acid biosynthesis; L-arginine biosynthesis; N(2)-acetyl-L-ornithine from L-glutamate: step 1/4. Functionally, N-acetylglutamate synthase involved in arginine biosynthesis. The polypeptide is Amino-acid acetyltransferase, mitochondrial (arg6) (Schizosaccharomyces pombe (strain 972 / ATCC 24843) (Fission yeast)).